Consider the following 361-residue polypeptide: 3-dehydroquinate synthase (361 aa).

Residues 104 to 108 (GVIGD), 128 to 129 (TT), lysine 140, and lysine 149 each bind NAD(+). The Zn(2+) site is built by glutamate 182, histidine 245, and histidine 262.

This sequence belongs to the sugar phosphate cyclases superfamily. Dehydroquinate synthase family. Requires NAD(+) as cofactor. Co(2+) serves as cofactor. It depends on Zn(2+) as a cofactor.

The protein resides in the cytoplasm. The catalysed reaction is 7-phospho-2-dehydro-3-deoxy-D-arabino-heptonate = 3-dehydroquinate + phosphate. The protein operates within metabolic intermediate biosynthesis; chorismate biosynthesis; chorismate from D-erythrose 4-phosphate and phosphoenolpyruvate: step 2/7. Functionally, catalyzes the conversion of 3-deoxy-D-arabino-heptulosonate 7-phosphate (DAHP) to dehydroquinate (DHQ). The protein is 3-dehydroquinate synthase of Halalkalibacterium halodurans (strain ATCC BAA-125 / DSM 18197 / FERM 7344 / JCM 9153 / C-125) (Bacillus halodurans).